We begin with the raw amino-acid sequence, 185 residues long: Regulatory protein RecX (185 aa).

The protein belongs to the RecX family.

The protein resides in the cytoplasm. Functionally, modulates RecA activity. The chain is Regulatory protein RecX from Thermobifida fusca (strain YX).